We begin with the raw amino-acid sequence, 1192 residues long: Leucine-rich repeat receptor protein kinase EMS1 (1192 aa).

An N-terminal signal peptide occupies residues 1–18 (MAFLTALFLFLFFSFSSS). Asparagine 47 carries an N-linked (GlcNAc...) asparagine glycan. 28 LRR repeats span residues 64-87 (LGRVNSLSLPSLSLRGQIPKEISS), 90-112 (NLRELCLAGNQFSGKIPPEIWNL), 114-137 (HLQTLDLSGNSLTGLLPRLLSELP), 138-160 (QLLYLDLSDNHFSGSLPPSFFIS), 163-185 (ALSSLDVSNNSLSGEIPPEIGKL), 187-209 (NLSNLYMGLNSFSGQIPSEIGNI), 235-257 (HLAKLDLSYNPLKCSIPKSFGEL), 259-281 (NLSILNLVSAELIGLIPPELGNC), 283-304 (SLKSLMLSFNSLSGPLPLELSE), 330-352 (VLDSLLLANNRFSGEIPHEIEDC), 354-376 (MLKHLSLASNLLSGSIPRELCGS), 378-400 (SLEAIDLSGNLLSGTIEEVFDGC), 402-425 (SLGELLLTNNQINGSIPEDLWKLP), 426-447 (LMALDLDSNNFTGEIPKSLWKS), 449-471 (NLMEFTASYNRLEGYLPAEIGNA), 473-496 (SLKRLVLSDNQLTGEIPREIGKLT), 497-520 (SLSVLNLNANMFQGKIPVELGDCT), 521-543 (SLTTLDLGSNNLQGQIPDKITAL), 545-567 (QLQCLVLSYNNLSGSIPSKPSAY), 581-603 (HHGIFDLSYNRLSGPIPEELGEC), 605-628 (VLVEISLSNNHLSGEIPASLSRLT), 629-651 (NLTILDLSGNALTGSIPKEMGNS), 653-675 (KLQGLNLANNQLNGHIPESFGLL), 677-697 (SLVKLNLTKNKLDGPVPASLG), 701-723 (ELTHMDLSFNNLSGELSSELSTM), 725-748 (KLVGLYIEQNKFTGEIPSELGNLT), 749-772 (QLEYLDVSENLLSGEIPTKICGLP), and 773-795 (NLEFLNLAKNNLRGEVPSDGVCQ). 3 N-linked (GlcNAc...) asparagine glycosylation sites follow: asparagine 171, asparagine 187, and asparagine 208. Asparagine 259 carries N-linked (GlcNAc...) asparagine glycosylation. Asparagine 414 and asparagine 435 each carry an N-linked (GlcNAc...) asparagine glycan. Asparagine 555 is a glycosylation site (N-linked (GlcNAc...) asparagine). N-linked (GlcNAc...) asparagine glycosylation is present at asparagine 629. N-linked (GlcNAc...) asparagine glycosylation is found at asparagine 682, asparagine 711, and asparagine 746. Residues 828 to 848 (WGIAGLMLGFTIIVFVFVFSL) form a helical membrane-spanning segment. Residue threonine 914 is modified to Phosphothreonine. Positions 917–1192 (FSKKNIIGDG…LDVLKALKEI (276 aa)) constitute a Protein kinase domain. Residues 923–931 (IGDGGFGTV) and lysine 945 each bind ATP. Tyrosine 990 carries the post-translational modification Phosphotyrosine. The active-site Proton acceptor is the aspartate 1043. Residue tyrosine 1085 is modified to Phosphotyrosine.

This sequence belongs to the protein kinase superfamily. Ser/Thr protein kinase family. Interacts with TPD1. Post-translationally, autophosphorylates in vitro. In terms of tissue distribution, present in young buds, open flowers and siliques but absent from mature leaves and roots. Strongly expressed in the young organ primordia, and as the anthers and ovules developed, became focused in the microsporangia and in the distal and chalazal regions of the ovule. In cv. Landsberg erecta, only expressed in the anthers of young floral buds.

It localises to the cell membrane. It carries out the reaction L-seryl-[protein] + ATP = O-phospho-L-seryl-[protein] + ADP + H(+). The catalysed reaction is L-threonyl-[protein] + ATP = O-phospho-L-threonyl-[protein] + ADP + H(+). In terms of biological role, receptor with a serine/threonine-protein kinase activity required for the specification of the correct number of male archesporial initials and for the subsequent specification of tapetal and middle cell layer identities. In seeds, required for enhancing cell size and the rate of embryonic development. The sequence is that of Leucine-rich repeat receptor protein kinase EMS1 from Arabidopsis thaliana (Mouse-ear cress).